Consider the following 242-residue polypeptide: HTH-type transcriptional regulator GadW (242 aa).

The 98-residue stretch at 139-236 (GKVERLISFD…GVTPHQFAQH (98 aa)) folds into the HTH araC/xylS-type domain. 2 DNA-binding regions (H-T-H motif) span residues 156-177 (RDIA…QDEN) and 203-226 (LHTI…RQYY).

In terms of assembly, homodimer.

Functionally, depending on the conditions (growth phase and medium), acts as a positive or negative regulator of gadA and gadBC. Repression occurs directly or via the repression of the expression of gadX. Activation occurs directly by the binding of GadW to the gadA and gadBC promoters. The sequence is that of HTH-type transcriptional regulator GadW (gadW) from Escherichia coli (strain K12).